A 389-amino-acid polypeptide reads, in one-letter code: Succinate--CoA ligase [ADP-forming] subunit beta (389 aa).

The 236-residue stretch at 9 to 244 (KAVLAKYGVP…LTEEDPAEVE (236 aa)) folds into the ATP-grasp domain. Residues K46, 53–55 (GRG), E99, S102, and E107 each bind ATP. 2 residues coordinate Mg(2+): N199 and D213. Substrate-binding positions include N264 and 321–323 (GIM).

Belongs to the succinate/malate CoA ligase beta subunit family. As to quaternary structure, heterotetramer of two alpha and two beta subunits. Mg(2+) is required as a cofactor.

The catalysed reaction is succinate + ATP + CoA = succinyl-CoA + ADP + phosphate. It carries out the reaction GTP + succinate + CoA = succinyl-CoA + GDP + phosphate. Its pathway is carbohydrate metabolism; tricarboxylic acid cycle; succinate from succinyl-CoA (ligase route): step 1/1. Its function is as follows. Succinyl-CoA synthetase functions in the citric acid cycle (TCA), coupling the hydrolysis of succinyl-CoA to the synthesis of either ATP or GTP and thus represents the only step of substrate-level phosphorylation in the TCA. The beta subunit provides nucleotide specificity of the enzyme and binds the substrate succinate, while the binding sites for coenzyme A and phosphate are found in the alpha subunit. This chain is Succinate--CoA ligase [ADP-forming] subunit beta, found in Parvibaculum lavamentivorans (strain DS-1 / DSM 13023 / NCIMB 13966).